The chain runs to 209 residues: Uracil phosphoribosyltransferase (209 aa).

5-phospho-alpha-D-ribose 1-diphosphate is bound by residues R79, R104, and 131–139; that span reads DPMLATGGS. Residues I194 and 199-201 contribute to the uracil site; that span reads GDA. Position 200 (D200) interacts with 5-phospho-alpha-D-ribose 1-diphosphate.

This sequence belongs to the UPRTase family. Mg(2+) is required as a cofactor.

It carries out the reaction UMP + diphosphate = 5-phospho-alpha-D-ribose 1-diphosphate + uracil. The protein operates within pyrimidine metabolism; UMP biosynthesis via salvage pathway; UMP from uracil: step 1/1. Allosterically activated by GTP. Its function is as follows. Catalyzes the conversion of uracil and 5-phospho-alpha-D-ribose 1-diphosphate (PRPP) to UMP and diphosphate. The sequence is that of Uracil phosphoribosyltransferase from Lysinibacillus sphaericus (strain C3-41).